The following is a 338-amino-acid chain: UDP-3-O-acylglucosamine N-acyltransferase (338 aa).

The active-site Proton acceptor is the histidine 239.

This sequence belongs to the transferase hexapeptide repeat family. LpxD subfamily. In terms of assembly, homotrimer.

It carries out the reaction a UDP-3-O-[(3R)-3-hydroxyacyl]-alpha-D-glucosamine + a (3R)-hydroxyacyl-[ACP] = a UDP-2-N,3-O-bis[(3R)-3-hydroxyacyl]-alpha-D-glucosamine + holo-[ACP] + H(+). Its pathway is bacterial outer membrane biogenesis; LPS lipid A biosynthesis. In terms of biological role, catalyzes the N-acylation of UDP-3-O-acylglucosamine using 3-hydroxyacyl-ACP as the acyl donor. Is involved in the biosynthesis of lipid A, a phosphorylated glycolipid that anchors the lipopolysaccharide to the outer membrane of the cell. The chain is UDP-3-O-acylglucosamine N-acyltransferase from Xylella fastidiosa (strain M23).